The following is a 196-amino-acid chain: Elongation factor Ts (196 aa).

The tract at residues 80-83 (TDFV) is involved in Mg(2+) ion dislocation from EF-Tu.

The protein belongs to the EF-Ts family. Heterotetramer composed of two EF-Ts.EF-Tu dimer complexes.

Its subcellular location is the cytoplasm. Its function is as follows. Associates with the EF-Tu.GDP complex and induces the exchange of GDP to GTP. It remains bound to the aminoacyl-tRNA.EF-Tu.GTP complex up to the GTP hydrolysis stage on the ribosome. The protein is Elongation factor Ts (tsf) of Thermus thermophilus (strain ATCC 27634 / DSM 579 / HB8).